Here is a 557-residue protein sequence, read N- to C-terminus: Elongator complex protein 3 (557 aa).

Positions 91–381 (RTASGIAVVA…YRVQRDIPMP (291 aa)) constitute a Radical SAM core domain. Residues C108, C118, and C121 each coordinate [4Fe-4S] cluster. Residue K173 coordinates acetyl-CoA. In terms of domain architecture, N-acetyltransferase spans 405–557 (TTCRDVRTRE…LDGPYMSKRI (153 aa)). Residue K453 forms a Glycyl lysine isopeptide (Lys-Gly) (interchain with G-Cter in ubiquitin) linkage. Acetyl-CoA is bound by residues 485 to 488 (ELHV), 508 to 510 (FGT), and Y541.

It belongs to the ELP3 family. Component of the elongator complex which consists of ELP1/IKI3, ELP2, ELP3, ELP4, ELP5/IKI1 and ELP6. The elongator complex is composed of two copies of the Elp123 subcomplex (composed of ELP1/IKI3, ELP2 and ELP3) and two copies of the Elp456 subcomplex (composed of ELP4, ELP5/IKI1 and ELP6). The Elp123 subcomplex forms a two-lobed scaffold, which binds the Elp456 subcomplex asymmetrically. In each lobe, ELP2 is tightly sandwiched between ELP1/IKI3 and ELP3. The Elp123 subcomplex binds tRNA through ELP1/IKI3 and ELP3 and can bind 2 tRNAs simultaneously. tRNA-binding induces conformational rearrangements which precisely position the targeted anticodon base in the active site. ELP3 interacts with KTI11/DPH3. ELP3 interacts with KTI12. The Elp456 subcomplex binds tRNA and has ATPase activity. The cofactor is [4Fe-4S] cluster.

The protein localises to the cytoplasm. It is found in the nucleus. The catalysed reaction is uridine(34) in tRNA + acetyl-CoA + S-adenosyl-L-methionine + H2O = 5-(carboxymethyl)uridine(34) in tRNA + 5'-deoxyadenosine + L-methionine + CoA + 2 H(+). Its pathway is tRNA modification; 5-methoxycarbonylmethyl-2-thiouridine-tRNA biosynthesis. Functionally, catalytic tRNA acetyltransferase subunit of the elongator complex which is required for multiple tRNA modifications, including mcm5U (5-methoxycarbonylmethyl uridine), mcm5s2U (5-methoxycarbonylmethyl-2-thiouridine), and ncm5U (5-carbamoylmethyl uridine). In the elongator complex, acts as a tRNA uridine(34) acetyltransferase, which mediates formation of carboxymethyluridine in the wobble base at position 34 in tRNAs. The complex functions as a gamma-toxin target (TOT); disruption of the complex confers resistance to Kluyveromyces lactis toxin zymocin (pGKL1 killer toxin). May also be involved in sensitivity to Pichia inositovora toxin. Independently, ELP3 may be involved in polarized exocytosis. The polypeptide is Elongator complex protein 3 (Saccharomyces cerevisiae (strain ATCC 204508 / S288c) (Baker's yeast)).